A 200-amino-acid polypeptide reads, in one-letter code: Holliday junction branch migration complex subunit RuvA (200 aa).

The interval 1 to 63 is domain I; it reads MIASVRGEVL…EDSMTLYGFP (63 aa). The domain II stretch occupies residues 64-142; that stretch reads DSESKELFGL…AVASTSGAVP (79 aa). The interval 142 to 146 is flexible linker; sequence PLGAG. Residues 147 to 200 form a domain III region; the sequence is GGGSVRDQIVEALVGLGFPAKQAEQAADSVLAEAPESTTSTALRSALSLLGKTR.

The protein belongs to the RuvA family. As to quaternary structure, homotetramer. Forms an RuvA(8)-RuvB(12)-Holliday junction (HJ) complex. HJ DNA is sandwiched between 2 RuvA tetramers; dsDNA enters through RuvA and exits via RuvB. An RuvB hexamer assembles on each DNA strand where it exits the tetramer. Each RuvB hexamer is contacted by two RuvA subunits (via domain III) on 2 adjacent RuvB subunits; this complex drives branch migration. In the full resolvosome a probable DNA-RuvA(4)-RuvB(12)-RuvC(2) complex forms which resolves the HJ.

It is found in the cytoplasm. Functionally, the RuvA-RuvB-RuvC complex processes Holliday junction (HJ) DNA during genetic recombination and DNA repair, while the RuvA-RuvB complex plays an important role in the rescue of blocked DNA replication forks via replication fork reversal (RFR). RuvA specifically binds to HJ cruciform DNA, conferring on it an open structure. The RuvB hexamer acts as an ATP-dependent pump, pulling dsDNA into and through the RuvAB complex. HJ branch migration allows RuvC to scan DNA until it finds its consensus sequence, where it cleaves and resolves the cruciform DNA. The sequence is that of Holliday junction branch migration complex subunit RuvA from Rhodococcus jostii (strain RHA1).